A 400-amino-acid polypeptide reads, in one-letter code: Opsin-3 (400 aa).

At 1–38 (MYSGNRSGDQGYWEDGAGAEGAAPAGTRSPAPLFSPTA) the chain is on the extracellular side. N-linked (GlcNAc...) asparagine glycosylation occurs at N5. A helical transmembrane segment spans residues 39–63 (YERLALLLGCLALLGVGGNLLVLLL). The Cytoplasmic segment spans residues 64–75 (YSKFPRLRTPTH). A helical transmembrane segment spans residues 76-100 (LFLVNLSLGDLLVSLFGVTFTFASC). The Extracellular segment spans residues 101–115 (LRNGWVWDAVGCAWD). Cysteines 112 and 186 form a disulfide. A helical membrane pass occupies residues 116–135 (GFSGSLFGFVSITTLTVLAY). The Cytoplasmic segment spans residues 136–151 (ERYIRVVHARVINFSW). The helical transmembrane segment at 152–175 (AWRAITYIWLYSLAWAGAPLLGWN) threads the bilayer. The Extracellular portion of the chain corresponds to 176–199 (RYILDIHGLGCTVDWRSKDANDSS). Residue N196 is glycosylated (N-linked (GlcNAc...) asparagine). The chain crosses the membrane as a helical span at residues 200–227 (FVLFLFLGCLVVPVGIIAHCYGHILYSV). Topologically, residues 228-253 (RMLRCVEDLQTIQVIKMLRYEKKVAK) are cytoplasmic. A helical transmembrane segment spans residues 254 to 277 (MCFLMAFVFLTCWMPYIVTRFLVV). At 278–285 (NGYGHLVT) the chain is on the extracellular side. A helical transmembrane segment spans residues 286–310 (PTVSIVSYLFAKSSTVYNPVIYIFM). Position 297 is an N6-(retinylidene)lysine (K297). At 311–400 (NRKFRRSLLQ…KVDVIQVRPL (90 aa)) the chain is on the cytoplasmic side. C323 carries the S-palmitoyl cysteine lipid modification.

It belongs to the G-protein coupled receptor 1 family. Opsin subfamily. As to quaternary structure, interacts with MC1R; the interaction results in a decrease in MC1R-mediated cAMP signaling and ultimately a decrease in melanin production in melanocytes. In terms of tissue distribution, expressed in the eye (at protein level). Expressed in tracheal airway smooth muscle. Expressed in brown adipocyte tissue; expression becomes more abundant during differentiation. Strongly expressed in brain. Highly expressed in the preoptic area and paraventricular nucleus of the hypothalamus. Shows highly patterned expression in other regions of the brain, being enriched in selected regions of the cerebral cortex, cerebellar Purkinje cells, a subset of striatal neurons, selected thalamic nuclei, and a subset of interneurons in the ventral horn of the spinal cord.

The protein localises to the cell membrane. The protein resides in the cytoplasm. Its function is as follows. G-protein coupled receptor which selectively activates G proteins via ultraviolet A (UVA) light-mediated activation in the skin. Binds both 11-cis retinal and all-trans retinal. Regulates melanogenesis in melanocytes via inhibition of alpha-MSH-induced MC1R-mediated cAMP signaling, modulation of calcium flux, regulation of CAMK2 phosphorylation, and subsequently phosphorylation of CREB, p38, ERK and MITF in response to blue light. Plays a role in melanocyte survival through regulation of intracellular calcium levels and subsequent BCL2/RAF1 signaling. Additionally regulates apoptosis via cytochrome c release and subsequent activation of the caspase cascade. Required for TYR and DCT blue light-induced complex formation in melanocytes. Involved in keratinocyte differentiation in response to blue-light. Required for the UVA-mediated induction of calcium and mitogen-activated protein kinase signaling resulting in the expression of MMP1, MMP2, MMP3, MMP9 and TIMP1 in dermal fibroblasts. Plays a role in light-mediated glucose uptake, mitochondrial respiration and fatty acid metabolism in brown adipocyte tissues. May be involved in photorelaxation of airway smooth muscle cells, via blue-light dependent GPCR signaling pathways. The chain is Opsin-3 (Opn3) from Mus musculus (Mouse).